The sequence spans 81 residues: MTSSSKCLFFVFLCLAALLTPYLAEAEDRSKLIPIGPCSKIANCNQTCIESQFLGGKCIKWYPDSIKETCACLVKPSITHV.

The first 26 residues, 1–26 (MTSSSKCLFFVFLCLAALLTPYLAEA), serve as a signal peptide directing secretion. 3 cysteine pairs are disulfide-bonded: Cys-38–Cys-58, Cys-44–Cys-70, and Cys-48–Cys-72.

The protein belongs to the DEFL family.

The protein localises to the secreted. The sequence is that of Putative defensin-like protein 31 from Arabidopsis thaliana (Mouse-ear cress).